The sequence spans 722 residues: uncharacterized protein (722 aa).

Active-site charge relay system residues include Ser575, Asp658, and His691.

Belongs to the peptidase S9B family.

This is an uncharacterized protein from Rickettsia prowazekii (strain Madrid E).